Reading from the N-terminus, the 2215-residue chain is Unconventional myosin-VIIa (2215 aa).

The Myosin motor domain occupies 65–741 (HGVEDMIRLG…HDMLLEVERD (677 aa)). An ATP-binding site is contributed by 158 to 165 (GESGAGKT). The actin-binding stretch occupies residues 632–639 (FVRCIKPN). IQ domains follow at residues 745-765 (TDRV…SNFL), 768-788 (KNAA…KNYG), 791-811 (RLGF…QQYR), 814-834 (RQRI…KAFR), and 837-857 (LWAV…RLHQ). The interval 858 to 935 (RLRAEYLWRL…LEQMERARHE (78 aa)) is SAH. Residues 1017 to 1253 (YTRRPLKQPL…PSWLELQATK (237 aa)) enclose the MyTH4 1 domain. Residues 1258 to 1602 (IMLPVTFMDG…LVVTFLEGLR (345 aa)) enclose the FERM 1 domain. Serine 1569 carries the post-translational modification Phosphoserine. Threonine 1571 carries the phosphothreonine modification. The SH3 domain maps to 1603 to 1672 (KRSKYVVALQ…PTDSVYVMPT (70 aa)). Residues 1747-1896 (HTREPLKQAL…PHLVEVEAIQ (150 aa)) enclose the MyTH4 2 domain. The FERM 2 domain occupies 1902 to 2205 (IFHKVYFPDD…SYISQMLTAM (304 aa)).

The protein belongs to the TRAFAC class myosin-kinesin ATPase superfamily. Myosin family. In terms of assembly, might homodimerize in a two headed molecule through the formation of a coiled-coil rod. Identified in a complex with USH1C and USH1G. Interacts with MYRIP. Interacts with RPE65. Interacts with CIB2. May interact with CALM. Interacts with WHRN. Interacts with PLEKHB1 (via PH domain). Interacts with PCDH15. Interacts with TWF2. Interacts with USH1G. Interacts with MYH9. Interacts (via MyTH4-FERM domains) with cytoplasmic regions of ADGRV1 and USH2A. Interacts with PDZD7 (via MyTH4-FERM domains). Interacts with CALML4. In terms of tissue distribution, expressed in the pigment epithelium and the photoreceptor cells of the retina. Also found in kidney, liver, testis, cochlea, lymphocytes. Not expressed in brain.

It localises to the cytoplasm. It is found in the cell cortex. Its subcellular location is the cytoskeleton. The protein resides in the synapse. ATP hydrolysis is inhibited by Mg(2+), already at a concentration of 0.4 mM. Its function is as follows. Myosins are actin-based motor molecules with ATPase activity. Unconventional myosins serve in intracellular movements. Their highly divergent tails bind to membranous compartments, which are then moved relative to actin filaments. In the retina, plays an important role in the renewal of the outer photoreceptor disks. Plays an important role in the distribution and migration of retinal pigment epithelial (RPE) melanosomes and phagosomes, and in the regulation of opsin transport in retinal photoreceptors. In the inner ear, plays an important role in differentiation, morphogenesis and organization of cochlear hair cell bundles. Involved in hair-cell vesicle trafficking of aminoglycosides, which are known to induce ototoxicity. Motor protein that is a part of the functional network formed by USH1C, USH1G, CDH23 and MYO7A that mediates mechanotransduction in cochlear hair cells. Required for normal hearing. The sequence is that of Unconventional myosin-VIIa from Homo sapiens (Human).